A 545-amino-acid polypeptide reads, in one-letter code: Chaperonin GroEL (545 aa).

ATP contacts are provided by residues 29-32 (TLGP), Lys-50, 86-90 (DGTTT), Gly-415, and Asp-495.

The protein belongs to the chaperonin (HSP60) family. As to quaternary structure, forms a cylinder of 14 subunits composed of two heptameric rings stacked back-to-back. Interacts with the co-chaperonin GroES.

Its subcellular location is the cytoplasm. The enzyme catalyses ATP + H2O + a folded polypeptide = ADP + phosphate + an unfolded polypeptide.. Functionally, together with its co-chaperonin GroES, plays an essential role in assisting protein folding. The GroEL-GroES system forms a nano-cage that allows encapsulation of the non-native substrate proteins and provides a physical environment optimized to promote and accelerate protein folding. The protein is Chaperonin GroEL of Porphyromonas gingivalis (strain ATCC BAA-308 / W83).